The sequence spans 101 residues: Small ribosomal subunit protein uS14 (101 aa).

This sequence belongs to the universal ribosomal protein uS14 family. In terms of assembly, part of the 30S ribosomal subunit. Contacts proteins S3 and S10.

Its function is as follows. Binds 16S rRNA, required for the assembly of 30S particles and may also be responsible for determining the conformation of the 16S rRNA at the A site. The chain is Small ribosomal subunit protein uS14 from Acinetobacter baumannii (strain SDF).